A 204-amino-acid polypeptide reads, in one-letter code: MMYKVRNMRETEVVISDKTANPAPLGLLGFGITTILLNLHNAGLFPINSMILAMGFAYGGIAQILASVMEYRKGNTFGTVAFGSYGLFWWSLVLLLVIPNLKFLETSGTAAASADPVAMASYLFMWGLFTLLMFIATLKLKRGIQVIFISLAVLFFLLTAGEITGSALITAVAGYEGIFTGAAAMYVGLAEVINETHGRDILPT.

6 consecutive transmembrane segments (helical) span residues 19-39 (TANPAPLGLLGFGITTILLNL), 42-62 (AGLFPINSMILAMGFAYGGIA), 78-98 (GTVAFGSYGLFWWSLVLLLVI), 116-136 (PVAMASYLFMWGLFTLLMFIA), 143-163 (GIQVIFISLAVLFFLLTAGEI), and 167-187 (ALITAVAGYEGIFTGAAAMYV).

It belongs to the acetate uptake transporter (AceTr) (TC 2.A.96) family.

The protein resides in the cell membrane. This is an uncharacterized protein from Methanothermobacter thermautotrophicus (strain ATCC 29096 / DSM 1053 / JCM 10044 / NBRC 100330 / Delta H) (Methanobacterium thermoautotrophicum).